The following is a 701-amino-acid chain: Elongation factor G (701 aa).

The 279-residue stretch at 8 to 286 (ERIRNIGIIA…AIVHYLPSPV (279 aa)) folds into the tr-type G domain. GTP is bound by residues 17 to 24 (AHIDAGKT), 85 to 89 (DTPGH), and 139 to 142 (NKMD).

It belongs to the TRAFAC class translation factor GTPase superfamily. Classic translation factor GTPase family. EF-G/EF-2 subfamily.

The protein resides in the cytoplasm. Its function is as follows. Catalyzes the GTP-dependent ribosomal translocation step during translation elongation. During this step, the ribosome changes from the pre-translocational (PRE) to the post-translocational (POST) state as the newly formed A-site-bound peptidyl-tRNA and P-site-bound deacylated tRNA move to the P and E sites, respectively. Catalyzes the coordinated movement of the two tRNA molecules, the mRNA and conformational changes in the ribosome. This chain is Elongation factor G, found in Roseiflexus sp. (strain RS-1).